The following is an 82-amino-acid chain: Small ribosomal subunit protein bS16 (82 aa).

Belongs to the bacterial ribosomal protein bS16 family.

The chain is Small ribosomal subunit protein bS16 from Synechococcus elongatus (strain ATCC 33912 / PCC 7942 / FACHB-805) (Anacystis nidulans R2).